Reading from the N-terminus, the 226-residue chain is MRIIALPLPNQRVFLHCYPSEYLAKKVTIHDKIINRIYKYWDSWSASKSYTKQKVVSLGNRILHATPYEENFLRAIAPVKKLNDTELHQTLYIEHPPNLESSTILAELNRSKQLQKTHTNYLIGNIIGLPLTIPFILIPLIPNIPGFYLCYRAYCNFRAIQGSIQLARVMSIENIQMQESEKLEKALKLFTNGDATPLNALIGHPDFVDRYKRAVAQEQRKSKIIK.

Residues 121–141 form a helical membrane-spanning segment; it reads YLIGNIIGLPLTIPFILIPLI.

This sequence to yeast YDL183c.

It localises to the membrane. This is an uncharacterized protein from Schizosaccharomyces pombe (strain 972 / ATCC 24843) (Fission yeast).